The sequence spans 236 residues: Ribonuclease 3 (236 aa).

The 130-residue stretch at 7–136 (KSYILKKFNI…FIGALYLDQG (130 aa)) folds into the RNase III domain. A Mg(2+)-binding site is contributed by Glu49. Residue Asp53 is part of the active site. The Mg(2+) site is built by Asp122 and Glu125. The active site involves Glu125. The 71-residue stretch at 162–232 (DFKSRLQERL…ARAALKILED (71 aa)) folds into the DRBM domain.

This sequence belongs to the ribonuclease III family. Homodimer. Mg(2+) serves as cofactor.

It is found in the cytoplasm. It catalyses the reaction Endonucleolytic cleavage to 5'-phosphomonoester.. Its function is as follows. Digests double-stranded RNA. Involved in the processing of primary rRNA transcript to yield the immediate precursors to the large and small rRNAs (23S and 16S). Processes some mRNAs, and tRNAs when they are encoded in the rRNA operon. Processes pre-crRNA and tracrRNA of type II CRISPR loci if present in the organism. In Leuconostoc mesenteroides subsp. mesenteroides (strain ATCC 8293 / DSM 20343 / BCRC 11652 / CCM 1803 / JCM 6124 / NCDO 523 / NBRC 100496 / NCIMB 8023 / NCTC 12954 / NRRL B-1118 / 37Y), this protein is Ribonuclease 3.